The sequence spans 61 residues: DNA-directed RNA polymerase subunit Rpo6 (61 aa).

The protein belongs to the archaeal Rpo6/eukaryotic RPB6 RNA polymerase subunit family. Part of the RNA polymerase complex.

Its subcellular location is the cytoplasm. It catalyses the reaction RNA(n) + a ribonucleoside 5'-triphosphate = RNA(n+1) + diphosphate. Its function is as follows. DNA-dependent RNA polymerase (RNAP) catalyzes the transcription of DNA into RNA using the four ribonucleoside triphosphates as substrates. This Thermoplasma acidophilum (strain ATCC 25905 / DSM 1728 / JCM 9062 / NBRC 15155 / AMRC-C165) protein is DNA-directed RNA polymerase subunit Rpo6.